Reading from the N-terminus, the 399-residue chain is Argininosuccinate synthase (399 aa).

8–16 (AYSGGLDTS) is a binding site for ATP. Residue tyrosine 87 participates in L-citrulline binding. ATP is bound at residue glycine 117. Threonine 119, asparagine 123, and aspartate 124 together coordinate L-aspartate. Residue asparagine 123 participates in L-citrulline binding. L-citrulline is bound by residues arginine 127, serine 175, glutamate 260, and tyrosine 272.

It belongs to the argininosuccinate synthase family. Type 1 subfamily. Homotetramer.

Its subcellular location is the cytoplasm. The catalysed reaction is L-citrulline + L-aspartate + ATP = 2-(N(omega)-L-arginino)succinate + AMP + diphosphate + H(+). It functions in the pathway amino-acid biosynthesis; L-arginine biosynthesis; L-arginine from L-ornithine and carbamoyl phosphate: step 2/3. The sequence is that of Argininosuccinate synthase from Rhodococcus jostii (strain RHA1).